Consider the following 373-residue polypeptide: Chaperone protein DnaJ (373 aa).

A J domain is found at 5-70 (DYYEVLGLQK…EKKSNYDQFG (66 aa)). The segment at 132-214 (GVEKEITVNR…CRGNGNVRKT (83 aa)) adopts a CR-type zinc-finger fold. Residues Cys-145, Cys-148, Cys-162, Cys-165, Cys-188, Cys-191, Cys-202, and Cys-205 each contribute to the Zn(2+) site. CXXCXGXG motif repeat units follow at residues 145–152 (CEHCNGSG), 162–169 (CPTCSGTG), 188–195 (CDRCSGTG), and 202–209 (CTHCRGNG).

The protein belongs to the DnaJ family. In terms of assembly, homodimer. It depends on Zn(2+) as a cofactor.

The protein resides in the cytoplasm. In terms of biological role, participates actively in the response to hyperosmotic and heat shock by preventing the aggregation of stress-denatured proteins and by disaggregating proteins, also in an autonomous, DnaK-independent fashion. Unfolded proteins bind initially to DnaJ; upon interaction with the DnaJ-bound protein, DnaK hydrolyzes its bound ATP, resulting in the formation of a stable complex. GrpE releases ADP from DnaK; ATP binding to DnaK triggers the release of the substrate protein, thus completing the reaction cycle. Several rounds of ATP-dependent interactions between DnaJ, DnaK and GrpE are required for fully efficient folding. Also involved, together with DnaK and GrpE, in the DNA replication of plasmids through activation of initiation proteins. The polypeptide is Chaperone protein DnaJ (Clostridium botulinum (strain Eklund 17B / Type B)).